Here is a 79-residue protein sequence, read N- to C-terminus: M-myrmicitoxin(01)-Tb1a (79 aa).

Residues 1-26 form the signal peptide; it reads MKLSFLSLVLAIILVMALMYTPHAEA. The propeptide occupies 27-56; sequence KAWADADADATAAADADADAVADALADAVA. V76 carries the valine amide modification.

Belongs to the formicidae venom precursor-01 superfamily. The C-terminal amidation is important for antimicrobial activity, since a non-amidated synthetic peptide shows a reduced antimicrobial activity (2-20-fold depending on the strain tested). The amidation may play a positive role in the peptide conformation, since amidated peptide shows an increase of about 5% of helical content. As to expression, expressed by the venom gland.

Its subcellular location is the secreted. It localises to the target cell membrane. In terms of biological role, antimicrobial peptide that shows antimicrobial activities against all microorganisms tested with minimal inhibitory concentrations (MICs) values ranging from 0.45 to 97.5 umol/L. This peptide kills the microorganisms by permeabilizating the membranes. It shows a very weak hemolytic activity (HC(50)=325 umol/L) and weak cytotoxicity against human lymphocytes (LC(50)=67.8 umol/L). Gram-negative bacteria tested are E.coli (MIC=24.4 umol/L), C.sakazakii (MIC=5.8 umol/L), P.aeruginosa (MIC=8.7-12.2 umol/L), S.enterica (MIC=5.4 umol/L), and H.pylori (MIC=0.99-3.9 umol/L). Gram-positive bacteria tested are E.hirae (MIC=12.2 umol/L), S.aureus (MIC=3.0-6.4 umol/L), methicillin-resistant S.aureus (MRSA) (MIC=8.7 umol/L), S.xylosus (MIC=0.45-1.3 umol/L), and B.subtilis (MIC=24.4 umol/L). Fungi tested are A.niger (MIC=0.75 umol/L), C.albicans (MIC=17.3 umol/L), G.candidum (MIC=97.5 umol/L), and S.cerevisiae (MIC=6.1 umol/L). Finally the parasite tested is L.infantum (MIC=1.5 umol/L). This chain is M-myrmicitoxin(01)-Tb1a, found in Tetramorium bicarinatum (Tramp ant).